The following is a 161-amino-acid chain: uncharacterized protein (161 aa).

This is an uncharacterized protein from Sinorhizobium fredii (strain NBRC 101917 / NGR234).